The sequence spans 418 residues: MSIEIPAGLTELLQGFTVEVLRHQPADLLEFALQHFTRLQQENERKGTARFGHEGRTWGDLGAAAGGGTPSKGVNFAEEPMQSDSEDGEEEEAAPADAGAFNAPVINRFTRRASVCAEAYNPDEEEDDAESRIIHPKTDDQRNRLQEACKDILLFKNLDPEQMSQVLDAMFEKLVKDGEHVIDQGDDGDNFYVIDRGTFDIYVKCDGVGRCVGNYDNRGSFGELALMYNTPRAATITATSPGALWGLDRVTFRRIIVKNNAKKRKMYESFIESLPFLKSLEFSERLKVVDVIGTKVYNDGEQIIAQGDSADSFFIVESGEVKITMKRKGKSEVEENGAVEIARCSRGQYFGELALVTNKPRAASAHAIGTVKCLAMDVQAFERLLGPCMEIMKRNIATYEEQLVALFGTNMDIVEPTA.

Positions 2–153 are dimerization and phosphorylation; that stretch reads SIEIPAGLTE…RLQEACKDIL (152 aa). Over residues 48-57 the composition is skewed to basic and acidic residues; the sequence is TARFGHEGRT. Positions 48-96 are disordered; it reads TARFGHEGRTWGDLGAAAGGGTPSKGVNFAEEPMQSDSEDGEEEEAAPA. The residue at position 69 (Thr69) is a Phosphothreonine. Ser83, Ser85, and Ser114 each carry phosphoserine. The span at 84-94 shows a compositional bias: acidic residues; the sequence is DSEDGEEEEAA. Residues 154–275, Glu223, Arg232, 276–418, Glu352, and Arg361 each bind 3',5'-cyclic AMP; these read LFKN…ESLP and FLKS…EPTA.

It belongs to the cAMP-dependent kinase regulatory chain family. The inactive form of the enzyme is composed of two regulatory chains and two catalytic chains. Activation by cAMP produces two active catalytic monomers and a regulatory dimer that binds four cAMP molecules. Interacts with PRKACA and PRKACB. Interacts with the phosphorylated form of PJA2. Forms a complex composed of PRKAR2B, GSK3B and GSKIP through GSKIP interaction; facilitates PKA-induced phosphorylation and regulates GSK3B activity. Post-translationally, phosphorylated by the activated catalytic chain. Four types of regulatory chains are found: I-alpha, I-beta, II-alpha, and II-beta. Their expression varies among tissues and is in some cases constitutive and in others inducible.

It is found in the cytoplasm. The protein localises to the cell membrane. In terms of biological role, regulatory subunit of the cAMP-dependent protein kinases involved in cAMP signaling in cells. Type II regulatory chains mediate membrane association by binding to anchoring proteins, including the MAP2 kinase. This chain is cAMP-dependent protein kinase type II-beta regulatory subunit (PRKAR2B), found in Homo sapiens (Human).